The following is a 186-amino-acid chain: ADP-ribosylation factor-like protein 8A (186 aa).

The segment at residues 1 to 19 is an intramembrane region (note=Mediates targeting to membranes); it reads MLALFNKLLDWFRALFWKE. GTP is bound by residues 29 to 35, 71 to 75, and 130 to 133; these read QYSGKTT, DIGGQ, and NKRD.

This sequence belongs to the small GTPase superfamily. Arf family.

The protein resides in the late endosome membrane. The protein localises to the lysosome membrane. It localises to the cytoplasm. Its subcellular location is the cytoskeleton. It is found in the spindle. The protein resides in the cell projection. The protein localises to the axon. It localises to the synapse. In terms of biological role, plays a role in lysosome motility. In neurons, mediates the anterograde axonal long-range transport of presynaptic lysosome-related vesicles required for presynaptic biogenesis and synaptic function. May play a role in chromosome segregation. The sequence is that of ADP-ribosylation factor-like protein 8A (ARL8A) from Gallus gallus (Chicken).